The chain runs to 232 residues: tRNA (guanine-N(1)-)-methyltransferase (232 aa).

S-adenosyl-L-methionine is bound at residue Gly-116.

The protein belongs to the RNA methyltransferase TrmD family. As to quaternary structure, homodimer.

It is found in the cytoplasm. The catalysed reaction is guanosine(37) in tRNA + S-adenosyl-L-methionine = N(1)-methylguanosine(37) in tRNA + S-adenosyl-L-homocysteine + H(+). Functionally, specifically methylates guanosine-37 in various tRNAs. This chain is tRNA (guanine-N(1)-)-methyltransferase, found in Chlorobium luteolum (strain DSM 273 / BCRC 81028 / 2530) (Pelodictyon luteolum).